Here is a 453-residue protein sequence, read N- to C-terminus: Ferruginol synthase (453 aa).

Residues 15 to 35 (LSKKYGPLMSIHLGSLYTVIV) form a helical membrane-spanning segment. C397 is a binding site for heme.

Belongs to the cytochrome P450 family. It depends on heme as a cofactor. As to expression, expressed in leaf glandular trichomes.

The protein localises to the membrane. It catalyses the reaction abieta-8,11,13-triene + reduced [NADPH--hemoprotein reductase] + O2 = ferruginol + oxidized [NADPH--hemoprotein reductase] + H2O + H(+). The catalysed reaction is ferruginol + reduced [NADPH--hemoprotein reductase] + O2 = 11-hydroxyferruginol + oxidized [NADPH--hemoprotein reductase] + H2O + H(+). It carries out the reaction miltiradiene + 2 reduced [NADPH--hemoprotein reductase] + 2 O2 = 11-oxomiltiradiene + 2 oxidized [NADPH--hemoprotein reductase] + 3 H2O + 2 H(+). It functions in the pathway secondary metabolite biosynthesis; terpenoid biosynthesis. Its function is as follows. Monooxygenase involved in the biosynthesis of labdane-related diterpenes natural products. Catalyzes the oxidation of abietatriene to produce ferruginol. Ferruginol is an intermediate in the biosynthesis of carnosate, a potent antioxidant. May also convert miltiradiene into 11-oxomiltiradiene. This Salvia pomifera (Apple sage) protein is Ferruginol synthase.